Here is a 303-residue protein sequence, read N- to C-terminus: N-acetyl-D-glucosamine kinase (303 aa).

Residues 4–11 (GFDIGGTK) and 133–140 (GVGGGLVF) contribute to the ATP site. Zn(2+) is bound by residues His157, Cys177, Cys179, and Cys184.

It belongs to the ROK (NagC/XylR) family. NagK subfamily.

The enzyme catalyses N-acetyl-D-glucosamine + ATP = N-acetyl-D-glucosamine 6-phosphate + ADP + H(+). Its pathway is cell wall biogenesis; peptidoglycan recycling. In terms of biological role, catalyzes the phosphorylation of N-acetyl-D-glucosamine (GlcNAc) derived from cell-wall degradation, yielding GlcNAc-6-P. The polypeptide is N-acetyl-D-glucosamine kinase (Shigella flexneri serotype 5b (strain 8401)).